The following is a 358-amino-acid chain: 3-isopropylmalate dehydrogenase (358 aa).

79–92 (GPKWEHLPPDEQPE) serves as a coordination point for NAD(+). Positions 100, 110, 139, and 227 each coordinate substrate. Asp227, Asp251, and Asp255 together coordinate Mg(2+). 285 to 297 (GSAPDIAGKGVAN) provides a ligand contact to NAD(+).

Belongs to the isocitrate and isopropylmalate dehydrogenases family. LeuB type 1 subfamily. Homodimer. It depends on Mg(2+) as a cofactor. Mn(2+) serves as cofactor.

The protein localises to the cytoplasm. It carries out the reaction (2R,3S)-3-isopropylmalate + NAD(+) = 4-methyl-2-oxopentanoate + CO2 + NADH. It participates in amino-acid biosynthesis; L-leucine biosynthesis; L-leucine from 3-methyl-2-oxobutanoate: step 3/4. Its function is as follows. Catalyzes the oxidation of 3-carboxy-2-hydroxy-4-methylpentanoate (3-isopropylmalate) to 3-carboxy-4-methyl-2-oxopentanoate. The product decarboxylates to 4-methyl-2 oxopentanoate. This is 3-isopropylmalate dehydrogenase from Pseudoalteromonas translucida (strain TAC 125).